The following is a 169-amino-acid chain: Large ribosomal subunit protein uL10 (169 aa).

The protein belongs to the universal ribosomal protein uL10 family. In terms of assembly, part of the ribosomal stalk of the 50S ribosomal subunit. The N-terminus interacts with L11 and the large rRNA to form the base of the stalk. The C-terminus forms an elongated spine to which L12 dimers bind in a sequential fashion forming a multimeric L10(L12)X complex.

Functionally, forms part of the ribosomal stalk, playing a central role in the interaction of the ribosome with GTP-bound translation factors. In Orientia tsutsugamushi (strain Boryong) (Rickettsia tsutsugamushi), this protein is Large ribosomal subunit protein uL10.